The following is a 225-amino-acid chain: Phosphoglycolate phosphatase (225 aa).

D11 (nucleophile) is an active-site residue. Mg(2+)-binding residues include D11 and D13. A substrate-binding site is contributed by K153. D176 and D180 together coordinate Mg(2+).

This sequence belongs to the archaeal SPP-like hydrolase family. The cofactor is Mg(2+).

It catalyses the reaction 2-phosphoglycolate + H2O = glycolate + phosphate. Functionally, catalyzes the dephosphorylation of 2-phosphoglycolate. This Halobacterium salinarum (strain ATCC 29341 / DSM 671 / R1) protein is Phosphoglycolate phosphatase.